A 143-amino-acid chain; its full sequence is Transcriptional regulator MraZ (143 aa).

SpoVT-AbrB domains follow at residues 5-47 (EYNH…SMDE) and 76-119 (ATEC…SSDQ).

The protein belongs to the MraZ family. Forms oligomers.

It is found in the cytoplasm. It localises to the nucleoid. This Alkaliphilus metalliredigens (strain QYMF) protein is Transcriptional regulator MraZ.